Reading from the N-terminus, the 41-residue chain is Large ribosomal subunit protein bL36 (41 aa).

It belongs to the bacterial ribosomal protein bL36 family.

The protein is Large ribosomal subunit protein bL36 (rpmJ) of Agrobacterium fabrum (strain C58 / ATCC 33970) (Agrobacterium tumefaciens (strain C58)).